Here is a 412-residue protein sequence, read N- to C-terminus: Imidazolonepropionase (412 aa).

The Fe(3+) site is built by H76 and H78. Zn(2+) is bound by residues H76 and H78. Positions 85, 148, and 181 each coordinate 4-imidazolone-5-propanoate. An N-formimidoyl-L-glutamate-binding site is contributed by Y148. H242 is a binding site for Fe(3+). A Zn(2+)-binding site is contributed by H242. Residue E245 participates in 4-imidazolone-5-propanoate binding. D317 provides a ligand contact to Fe(3+). Position 317 (D317) interacts with Zn(2+). The N-formimidoyl-L-glutamate site is built by N319 and G321. S322 contacts 4-imidazolone-5-propanoate.

The protein belongs to the metallo-dependent hydrolases superfamily. HutI family. Zn(2+) is required as a cofactor. Requires Fe(3+) as cofactor.

The protein resides in the cytoplasm. The catalysed reaction is 4-imidazolone-5-propanoate + H2O = N-formimidoyl-L-glutamate. The protein operates within amino-acid degradation; L-histidine degradation into L-glutamate; N-formimidoyl-L-glutamate from L-histidine: step 3/3. Its function is as follows. Catalyzes the hydrolytic cleavage of the carbon-nitrogen bond in imidazolone-5-propanoate to yield N-formimidoyl-L-glutamate. It is the third step in the universal histidine degradation pathway. This is Imidazolonepropionase from Staphylococcus aureus (strain MRSA252).